The primary structure comprises 663 residues: Guanine nucleotide exchange factor subunit RGP1 (663 aa).

Phosphoserine occurs at positions 351, 354, 357, 363, 364, and 370. The interval 412–443 (GKDEDSSDPEPNDSHFSNEMVTSAESSLRSDA) is disordered. Residues 426–440 (HFSNEMVTSAESSLR) are compositionally biased toward polar residues.

It belongs to the RGP1 family. Forms a complex with RIC1.

It is found in the golgi apparatus. Functionally, the RIC1-RGP1 complex acts as a guanine nucleotide exchange factor (GEF), which activates YPT6 by exchanging bound GDP for free GTP. It is thereby required for efficient fusion of endosome-derived vesicles with the Golgi. The RIC1-RGP1 participates in the recycling of SNC1, presumably by mediating fusion of endosomal vesicles with the Golgi compartment. Its function is as follows. Required for proper mitotic growth. In Saccharomyces cerevisiae (strain ATCC 204508 / S288c) (Baker's yeast), this protein is Guanine nucleotide exchange factor subunit RGP1.